The primary structure comprises 204 residues: Inactive ribonuclease-like protein 9 (204 aa).

The first 26 residues, 1–26 (MMRTPITTHPLLLLLLLQQLLQPVQF), serve as a signal peptide directing secretion. 3 disulfides stabilise this stretch: cysteine 97/cysteine 152, cysteine 115/cysteine 167, and cysteine 122/cysteine 129. N-linked (GlcNAc...) asparagine glycans are attached at residues asparagine 130 and asparagine 142.

It belongs to the pancreatic ribonuclease family.

It is found in the secreted. Does not exhibit any ribonuclease activity. This is Inactive ribonuclease-like protein 9 (RNASE9) from Macaca nemestrina (Pig-tailed macaque).